Here is a 413-residue protein sequence, read N- to C-terminus: uncharacterized protein (413 aa).

Positions 1–20 (MRVIIVIMMVVFVVVGTSSG) are cleaved as a signal peptide.

This is an uncharacterized protein from Archaeoglobus fulgidus (strain ATCC 49558 / DSM 4304 / JCM 9628 / NBRC 100126 / VC-16).